The chain runs to 526 residues: MGLLQELAGHPLAQQFQELPLGQQVGIGFAVFLVLSVVLNVLNQLLFRNPNEPPMVFHWFPFVGSTITYGMDPPTFFRENRAKHGDVFTFILLGKKTTVAVGPAGNDFILNGKLKDVCAEEIYTVLTTPVFGKDVVYDCPNAKLMEQKKFMKIALTTEAFRSYVPIISSEVRDYFKRSPDFKGKSGIADIPKKMAEITIFTASHALQGSAIRSKFDESLAALYHDLDMGFTPINFMLHWAPLPWNRKRDHAQRTVAKIYMDTIKERRAKGNNESEHDMMKHLMNSTYKNGIRVPDHEVAHMMIALLMAGQHSSSSTSSWIMLRLAQYPHIMEELYQEQVKNLGADLPPLTYEDLAKLPLNQAIVKETLRLHAPIHSIMRAVKSPMPVPGTKYVIPTSHTLLAAPGVSATDSAFFPNPDEWDPHRWEADSPNFPRMASKGEDEEKIDYGYGLVSKGSASPYLPFGAGRHRCIGEHFANAQLQTIVAEVVREFKFRNVDGGHTLIDTDYASLFSRPLEPANIHWERRQ.

The chain crosses the membrane as a helical span at residues 27 to 47 (IGFAVFLVLSVVLNVLNQLLF). Residue Tyr123 coordinates lanosterol. Cys470 contacts heme.

Belongs to the cytochrome P450 family. Heme is required as a cofactor.

The protein resides in the endoplasmic reticulum membrane. It carries out the reaction a 14alpha-methyl steroid + 3 reduced [NADPH--hemoprotein reductase] + 3 O2 = a Delta(14) steroid + formate + 3 oxidized [NADPH--hemoprotein reductase] + 4 H2O + 4 H(+). It catalyses the reaction a 14alpha-methyl steroid + reduced [NADPH--hemoprotein reductase] + O2 = a 14alpha-hydroxymethyl steroid + oxidized [NADPH--hemoprotein reductase] + H2O + H(+). The enzyme catalyses a 14alpha-hydroxymethyl steroid + reduced [NADPH--hemoprotein reductase] + O2 = a 14alpha-formyl steroid + oxidized [NADPH--hemoprotein reductase] + 2 H2O + H(+). The catalysed reaction is a 14alpha-formyl steroid + reduced [NADPH--hemoprotein reductase] + O2 = a Delta(14) steroid + formate + oxidized [NADPH--hemoprotein reductase] + H2O + 2 H(+). It carries out the reaction lanosterol + 3 reduced [NADPH--hemoprotein reductase] + 3 O2 = 4,4-dimethyl-5alpha-cholesta-8,14,24-trien-3beta-ol + formate + 3 oxidized [NADPH--hemoprotein reductase] + 4 H2O + 4 H(+). It catalyses the reaction lanosterol + reduced [NADPH--hemoprotein reductase] + O2 = 32-hydroxylanosterol + oxidized [NADPH--hemoprotein reductase] + H2O + H(+). The enzyme catalyses 32-hydroxylanosterol + reduced [NADPH--hemoprotein reductase] + O2 = 32-oxolanosterol + oxidized [NADPH--hemoprotein reductase] + 2 H2O + H(+). The catalysed reaction is 32-oxolanosterol + reduced [NADPH--hemoprotein reductase] + O2 = 4,4-dimethyl-5alpha-cholesta-8,14,24-trien-3beta-ol + formate + oxidized [NADPH--hemoprotein reductase] + H2O + 2 H(+). It carries out the reaction eburicol + 3 reduced [NADPH--hemoprotein reductase] + 3 O2 = 14-demethyleburicol + formate + 3 oxidized [NADPH--hemoprotein reductase] + 4 H2O + 4 H(+). It catalyses the reaction eburicol + reduced [NADPH--hemoprotein reductase] + O2 = 32-hydroxyeburicol + oxidized [NADPH--hemoprotein reductase] + H2O + H(+). The enzyme catalyses 32-hydroxyeburicol + reduced [NADPH--hemoprotein reductase] + O2 = 32-oxoeburicol + oxidized [NADPH--hemoprotein reductase] + 2 H2O + H(+). The catalysed reaction is 32-oxoeburicol + reduced [NADPH--hemoprotein reductase] + O2 = 14-demethyleburicol + formate + oxidized [NADPH--hemoprotein reductase] + H2O + 2 H(+). Its pathway is steroid metabolism; ergosterol biosynthesis. In terms of biological role, together with cyp51A and cyp51C, encodes the sterol 14alpha-demethylase that plays a critical role in the third module of ergosterol biosynthesis pathway, being ergosterol the major sterol component in fungal membranes that participates in a variety of functions. Essential for ascospore production. The third module or late pathway involves the ergosterol synthesis itself through consecutive reactions that mainly occur in the endoplasmic reticulum (ER) membrane. In filamentous fungi, during the initial step of this module, lanosterol (lanosta-8,24-dien-3beta-ol) can be metabolized to eburicol. Sterol 14alpha-demethylase catalyzes the three-step oxidative removal of the 14alpha-methyl group (C-32) of both these sterols in the form of formate, and converts eburicol and lanosterol to 14-demethyleburicol (4,4,24-trimethylergosta-8,14,24(28)-trienol) and 4,4-dimethyl-5alpha-cholesta-8,14,24-trien-3beta-ol, respectively, which are further metabolized by other enzymes in the pathway to ergosterol. Can also use substrates not intrinsic to fungi, such as 24,25-dihydrolanosterol (DHL), producing 4,4'-dimethyl-8,14-cholestadien-3-beta-ol, but at lower rates than the endogenous substrates. The protein is Sterol 14-alpha demethylase CYP51A of Gibberella zeae (strain ATCC MYA-4620 / CBS 123657 / FGSC 9075 / NRRL 31084 / PH-1) (Wheat head blight fungus).